Reading from the N-terminus, the 438-residue chain is Glycerophosphocholine cholinephosphodiesterase ENPP6 (438 aa).

A signal peptide spans 1-22 (MTRTLLKIYTLFILLLCRQRDA). Substrate-binding residues include D32, S69, and N90. Positions 32 and 69 each coordinate Zn(2+). S69 acts as the Nucleophile in catalysis. Phosphoserine is present on S69. C140 and C152 are disulfide-bonded. Residues 162 to 226 (KNLTDSMENA…ILNQKIREKN (65 aa)) are a coiled coil. A glycan (N-linked (GlcNAc...) asparagine) is linked at N163. A substrate-binding site is contributed by D191. Positions 191, 195, 238, and 239 each coordinate Zn(2+). H239 serves as a coordination point for substrate. Residues N258, N287, and N339 are each glycosylated (N-linked (GlcNAc...) asparagine). Substrate is bound at residue H352. Position 352 (H352) interacts with Zn(2+). An N-linked (GlcNAc...) asparagine glycan is attached at N402. A lipid anchor (GPI-anchor amidated serine) is attached at S415. A propeptide spans 416 to 438 (AATAGASLISCCFLLLLTLTGVC) (removed in mature form).

This sequence belongs to the nucleotide pyrophosphatase/phosphodiesterase family. Zn(2+) serves as cofactor.

It is found in the cell membrane. The catalysed reaction is sn-glycerol 3-phosphocholine + H2O = phosphocholine + glycerol + H(+). It catalyses the reaction a 1-acyl-sn-glycero-3-phosphocholine + H2O = a 1-acyl-sn-glycerol + phosphocholine + H(+). The enzyme catalyses a 1-O-alkyl-sn-glycero-3-phosphocholine + H2O = a 1-O-alkyl-sn-glycerol + phosphocholine + H(+). It carries out the reaction 1-dodecanoyl-sn-glycero-3-phosphocholine + H2O = 1-dodecanoyl-sn-glycerol + phosphocholine + H(+). The catalysed reaction is 1-hexadecanoyl-sn-glycero-3-phosphocholine + H2O = 1-hexadecanoyl-sn-glycerol + phosphocholine + H(+). It catalyses the reaction 1-(5Z,8Z,11Z,14Z-eicosatetraenoyl)-sn-glycero-3-phosphocholine + H2O = 1-(5Z,8Z,11Z,14Z-eicosatetraenoyl)-sn-glycerol + phosphocholine + H(+). The enzyme catalyses 1-tetradecanoyl-sn-glycero-3-phosphocholine + H2O = 1-tetradecanoyl-sn-glycerol + phosphocholine + H(+). It carries out the reaction sphing-4-enine-phosphocholine + H2O = sphing-4-enine + phosphocholine + H(+). The catalysed reaction is 1-(9Z-octadecenoyl)-sn-glycero-3-phosphocholine + H2O = 1-(9Z-octadecenoyl)-sn-glycerol + phosphocholine + H(+). It catalyses the reaction 1-(9Z,12Z)-octadecadienoyl-sn-glycero-3-phosphocholine + H2O = 1-(9Z,12Z-octadecadienoyl)-sn-glycerol + phosphocholine + H(+). The enzyme catalyses glycero-2-phosphocholine + H2O = phosphocholine + glycerol + H(+). Choline-specific glycerophosphodiesterase that hydrolyzes glycerophosphocholine (GPC) and lysophosphatidylcholine (LPC) and contributes to supplying choline to the cells. Has a preference for LPC with short (12:0 and 14:0) or polyunsaturated (18:2 and 20:4) fatty acids. In vitro, hydrolyzes only choline-containing lysophospholipids, such as sphingosylphosphorylcholine (SPC), platelet-activating factor (PAF) and lysoPAF, but not other lysophospholipids. The chain is Glycerophosphocholine cholinephosphodiesterase ENPP6 from Danio rerio (Zebrafish).